Consider the following 352-residue polypeptide: Tropomodulin-3 (352 aa).

The residue at position 25 (Ser-25) is a Phosphoserine.

The protein belongs to the tropomodulin family. In terms of assembly, binds to the N-terminus of tropomyosin and to actin. Interacts with FLII. Ubiquitous.

It is found in the cytoplasm. The protein localises to the cytoskeleton. In terms of biological role, blocks the elongation and depolymerization of the actin filaments at the pointed end. The Tmod/TM complex contributes to the formation of the short actin protofilament, which in turn defines the geometry of the membrane skeleton. The polypeptide is Tropomodulin-3 (TMOD3) (Homo sapiens (Human)).